We begin with the raw amino-acid sequence, 478 residues long: Sugar transporter ERD6-like 15 (478 aa).

12 helical membrane passes run 31-51, 67-87, 106-126, 129-149, 161-181, 185-205, 267-287, 305-325, 333-353, 366-386, 406-426, and 432-452; these read FVLA…IIGY, IADY…GALI, ILFV…LLDL, LLQG…ITEI, FAQL…TIVA, LAIL…FIPE, AFSL…GLNG, FGFI…TVLV, LLLV…ISFF, VLAL…MGSI, MCNL…SYLL, and GTFL…AKLV.

Belongs to the major facilitator superfamily. Sugar transporter (TC 2.A.1.1) family.

Its subcellular location is the membrane. Its function is as follows. Sugar transporter. This Arabidopsis thaliana (Mouse-ear cress) protein is Sugar transporter ERD6-like 15.